The chain runs to 715 residues: Solute carrier organic anion transporter family member 1C1 (715 aa).

Residues 1 to 43 (MDTSSKENAHLFHKNSAQPAGGPSFTVGYPSTEEARPCCGKLK) lie on the Cytoplasmic side of the membrane. Residues 44–63 (VFLGALSFVYFAKALAEGYL) form a helical membrane-spanning segment. The Extracellular segment spans residues 64-82 (KSTVTQIERRFEIPSSLVG). A helical membrane pass occupies residues 83-103 (IIDGSFEIGNLLVITFVSYFG). At 104–109 (AKLHRP) the chain is on the cytoplasmic side. Residues 110–134 (KIIGAGCLVMGFGTMLIAVPQFFME) form a helical membrane-spanning segment. Residues 135–187 (KYSYEKYERYSPSSNVTPSISPCYLESSSPSPSSILGKSQNKISHECVGDSSS) lie on the Extracellular side of the membrane. The chain crosses the membrane as a helical span at residues 188-216 (SMWVYVFLGNLLRGLGETPIQPLGIAYLD). Residues 217 to 235 (DFASEDNAAFYIGCVQTVA) lie on the Cytoplasmic side of the membrane. The chain crosses the membrane as a helical span at residues 236-256 (IIGPIFGFLLGSLCAKLYVDI). The Extracellular segment spans residues 257–274 (GFVNLDHITITPKDPQWV). The chain crosses the membrane as a helical span at residues 275–299 (GAWWLGYLIAGFLSLLAAVPFWCLP). Residues 300–351 (KTLPRSQSRENSGSTSEKSKFIDDPIHYQMAPGDDKMKIMEMAKDFLPSLKT) are Cytoplasmic-facing. Residues 352 to 373 (LFRNPVYILYLCASTVQFNSLF) traverse the membrane as a helical segment. The Extracellular segment spans residues 374–393 (GMVTYKPKYIEQQYGQSSSK). The helical transmembrane segment at 394–417 (ANFVIGLINIPAVALGIFSGGIVM) threads the bilayer. Over 418-421 (KKFR) the chain is Cytoplasmic. Residues 422 to 445 (LGICEATKLYLGSSVFGYLLFLSL) traverse the membrane as a helical segment. Residues 446-557 (FALGCENSSV…NGCSQMFLYF (112 aa)) lie on the Extracellular side of the membrane. N452 carries N-linked (GlcNAc...) asparagine glycosylation. The Kazal-like domain occupies 473 to 528 (RALFSDCNSRCKCSDSKWEPMCGDNGITYVSACLAGCQSSSRSGKNIIFSNCTCVG). 3 disulfide bridges follow: C479–C509, C485–C505, and C494–C526. N-linked (GlcNAc...) asparagine glycans are attached at residues N523 and N536. The helical transmembrane segment at 558-580 (LVISVITSYTLSLGGIPGYILLL) threads the bilayer. The Cytoplasmic portion of the chain corresponds to 581–589 (RCIQPQLKS). A helical transmembrane segment spans residues 590-615 (FALGIYTLAVRVLAGIPAPVYFGVLI). Over 616 to 649 (DTSCLKWGFKKCGSRGSCRLYDSHAFRHIYLGLT) the chain is Extracellular. Residues 650 to 667 (TLLGTVSVFLSMAVLFVL) traverse the membrane as a helical segment. Residues 668 to 715 (KKKYVSKHSSLITTREKIGMSSSIKKETCAARDRGLQPKYWPGKETRL) lie on the Cytoplasmic side of the membrane.

Belongs to the organo anion transporter (TC 2.A.60) family. Widely expressed throughout the brain except in the cerebellum. Not detected in kidney, heart, lung, skeletal muscle, spleen, liver, nor testis. Highly expressed in cerebral microvessels throughout the brain and in the choroid plexus (at mRNA and protein level).

It localises to the cell membrane. The catalysed reaction is 3,3',5'-triiodo-L-thyronine(out) = 3,3',5'-triiodo-L-thyronine(in). It carries out the reaction L-thyroxine(out) = L-thyroxine(in). The enzyme catalyses L-thyroxine sulfate(out) = L-thyroxine sulfate(in). It catalyses the reaction 17beta-estradiol 17-O-(beta-D-glucuronate)(out) = 17beta-estradiol 17-O-(beta-D-glucuronate)(in). The catalysed reaction is 3,3',5-triiodo-L-thyronine(out) = 3,3',5-triiodo-L-thyronine(in). Its function is as follows. Mediates the Na(+)-independent high affinity transport of thyroid hormones at the plasma membrane of brain capillary endothelial cells. The transport activity of substrates L-thyroxine (T4) and 3,3',5'-triiodo-L-thyronine (reverse T3, rT3) is much greater than that of 3,3',5-triiodo-L-thyronine (T3). The prehormone, T4, is the major form in the circulating blood and is converted to the active form, T3, by the iodothyronine-deiodinase in peripheral organs. T3 plays an essential role in brain development via binding to specific nuclear receptors (thyroid hormone receptor). Also transports organic anions such as the conjugated steroid 17-beta-glucuronosyl estradiol (17beta-estradiol 17-O-(beta-D-glucuronate)). Transports T4 and estrone-3-sulfate in a pH-insensitive manner. May serve as a drug efflux system at the blood brain barrier. This Mus musculus (Mouse) protein is Solute carrier organic anion transporter family member 1C1 (Slco1c1).